The primary structure comprises 418 residues: Beta-2 adrenergic receptor (418 aa).

Over 1-34 the chain is Extracellular; the sequence is MGQPGNRSVFLLAPNGSHAPDQDVPQERDEAWVV. Asn-6 and Asn-15 each carry an N-linked (GlcNAc...) asparagine glycan. The chain crosses the membrane as a helical span at residues 35-58; it reads GMAIVMSLIVLAIVFGNVLVITAI. Residues 59–71 lie on the Cytoplasmic side of the membrane; the sequence is AKFERLQTVTNYF. The chain crosses the membrane as a helical span at residues 72–95; sequence ITSLACADLVMGLAVVPFGASHIL. The Extracellular segment spans residues 96 to 106; that stretch reads MKMWTFGSFWC. Disulfide bonds link Cys-106-Cys-191 and Cys-184-Cys-190. The chain crosses the membrane as a helical span at residues 107 to 129; the sequence is EFWISIDVLCVTASIETLCVIAV. The Cytoplasmic portion of the chain corresponds to 130–150; sequence DRYLAITSPFKYQCLLTKNKA. Tyr-141 carries the post-translational modification Phosphotyrosine. A helical membrane pass occupies residues 151-174; that stretch reads RVVILMVWVVSGLISFLPIKMHWY. Residues 175 to 196 are Extracellular-facing; it reads QATHREALNCYAEEACCDFFTN. A helical membrane pass occupies residues 197 to 220; the sequence is QPYAIASSIVSFYLPLVVMVFVYS. Topologically, residues 221 to 274 are cytoplasmic; the sequence is RVFQVARRQLQKIDKSEGRFHAQNLSQAEQDGRSGPGHRRSSKFCLKEHKALKT. Ser-246 is modified (phosphoserine). Phosphoserine; by PKA is present on residues Ser-261 and Ser-262. Cys-265 carries the S-palmitoyl cysteine lipid modification. A helical transmembrane segment spans residues 275–298; it reads LGIIMGTFTLCWLPFFIVNIVHGI. Residues 299–305 are Extracellular-facing; sequence HDNLIPK. The chain crosses the membrane as a helical span at residues 306–329; that stretch reads EVYILLNWVGYVNSAFNPLIYCRS. At 330 to 418 the chain is on the cytoplasmic side; the sequence is PDFRMAFQEL…RNCSTNDSML (89 aa). Residue Cys-341 is the site of S-palmitoyl cysteine attachment. Residues Ser-345 and Ser-346 each carry the phosphoserine; by PKA modification. Phosphoserine; by BARK is present on residues Ser-355 and Ser-356. A disordered region spans residues 381-418; sequence RLCEDAPGPEGCAHRQGTVPDDSTDSQGRNCSTNDSML. 4-hydroxyproline is present on residues Pro-387 and Pro-400. The span at 405 to 418 shows a compositional bias: polar residues; that stretch reads DSQGRNCSTNDSML. A PDZ-binding motif is present at residues 415-418; sequence DSML.

Belongs to the G-protein coupled receptor 1 family. Adrenergic receptor subfamily. ADRB2 sub-subfamily. In terms of assembly, binds NHERF1 and GPRASP1. Interacts with ARRB1 and ARRB2. Interacts with SRC. Interacts with USP20 and USP33. Interacts with VHL; the interaction, which is increased on hydroxylation of ADRB2, ubiquitinates ADRB2 leading to its degradation. Interacts with EGLN3; the interaction hydroxylates ADRB2 facilitating VHL-E3 ligase-mediated ubiquitination. Interacts (via PDZ-binding motif) with SNX27 (via PDZ domain); the interaction is required when endocytosed to prevent degradation in lysosomes and promote recycling to the plasma membrane. Interacts with CNIH4. Interacts with ARRDC3. Interacts with NEDD4. Interacts with MARCHF2. Post-translationally, palmitoylated; may reduce accessibility of Ser-345 and Ser-346 by anchoring Cys-341 to the plasma membrane. Agonist stimulation promotes depalmitoylation and further allows Ser-345 and Ser-346 phosphorylation. Phosphorylated by PKA and BARK upon agonist stimulation, which mediates homologous desensitization of the receptor. PKA-mediated phosphorylation seems to facilitate phosphorylation by BARK. In terms of processing, phosphorylation of Tyr-141 is induced by insulin and leads to supersensitization of the receptor. Post-translationally, polyubiquitinated. Agonist-induced ubiquitination leads to sort internalized receptors to the lysosomes for degradation. Deubiquitination by USP20 and USP33, leads to ADRB2 recycling and resensitization after prolonged agonist stimulation. USP20 and USP33 are constitutively associated and are dissociated immediately after agonist stimulation. Ubiquitination by the VHL-E3 ligase complex is oxygen-dependent. Hydroxylation by EGLN3 occurs only under normoxia and increases the interaction with VHL and the subsequent ubiquitination and degradation of ADRB2. In terms of processing, palmitoylated. Mainly palmitoylated at Cys-341. Palmitoylation may reduce accessibility of phosphorylation sites by anchoring the receptor to the plasma membrane. Agonist stimulation promotes depalmitoylation and further allows Ser-345 and Ser-346 phosphorylation. Also undergoes transient, ligand-induced palmitoylation at Cys-265 probably by ZDHHC9, ZDHHC14 and ZDHHC18 within the Golgi. Palmitoylation at Cys-265 requires phosphorylation by PKA and receptor internalization and stabilizes the receptor. Could be depalmitoylated by LYPLA1 at the plasma membrane. Expressed in heart, liver, lung, skeletal muscle and subcutaneous adipose tissue.

Its subcellular location is the cell membrane. The protein resides in the early endosome. It localises to the golgi apparatus. Its function is as follows. Beta-adrenergic receptors mediate the catecholamine-induced activation of adenylate cyclase through the action of G proteins. The beta-2-adrenergic receptor binds epinephrine with an approximately 30-fold greater affinity than it does norepinephrine. This Sus scrofa (Pig) protein is Beta-2 adrenergic receptor (ADRB2).